A 229-amino-acid polypeptide reads, in one-letter code: Potassium/proton antiporter CemA (229 aa).

3 helical membrane passes run 6–26, 107–127, and 189–209; these read AFIP…ISLC, ILHF…SFWG, and ILSG…KYWI.

It belongs to the CemA family.

It localises to the plastid. The protein resides in the chloroplast inner membrane. It carries out the reaction K(+)(in) + H(+)(out) = K(+)(out) + H(+)(in). Contributes to K(+)/H(+) antiport activity by supporting proton efflux to control proton extrusion and homeostasis in chloroplasts in a light-dependent manner to modulate photosynthesis. Prevents excessive induction of non-photochemical quenching (NPQ) under continuous-light conditions. Indirectly promotes efficient inorganic carbon uptake into chloroplasts. The sequence is that of Potassium/proton antiporter CemA from Olimarabidopsis pumila (Dwarf rocket).